A 428-amino-acid polypeptide reads, in one-letter code: Metal tolerance protein 10 (428 aa).

Residues 1–140 lie on the Cytoplasmic side of the membrane; it reads MPLNSYIFFL…EMKKLAKSER (140 aa). The chain crosses the membrane as a helical span at residues 141 to 161; it reads LAVHISNATNLVLFVAKVYAS. The Vacuolar portion of the chain corresponds to 162-167; that stretch reads MESRSM. A helical transmembrane segment spans residues 168–188; the sequence is AVIASTLDSLLDLLSGFILWF. Residues 189–209 lie on the Cytoplasmic side of the membrane; sequence TANAMRKPNQFHYPIGKRRMQ. Residues 210–230 form a helical membrane-spanning segment; that stretch reads PVGIIVFASVMATLGLQVLLE. The Vacuolar portion of the chain corresponds to 231-248; that stretch reads SGRQLVAKSGIHMNSTEE. A helical membrane pass occupies residues 249 to 269; that stretch reads KWMIGIMVSVTIVKFLLMLYC. Residues 270-287 are Cytoplasmic-facing; it reads RGFQNEIVRAYAQDHLFD. The helical transmembrane segment at 288–308 threads the bilayer; the sequence is VVTNSIGLATAVLAVKFYWWI. The Vacuolar portion of the chain corresponds to 309 to 311; it reads DPT. The helical transmembrane segment at 312–332 threads the bilayer; the sequence is GAILIALYTIATWARTVLENV. Residues 333-428 lie on the Cytoplasmic side of the membrane; it reads HSLIGRSAPP…FTHRPEHKCN (96 aa).

This sequence belongs to the cation diffusion facilitator (CDF) transporter (TC 2.A.4) family. SLC30A subfamily.

It is found in the vacuole membrane. Involved in sequestration of excess metal in the cytoplasm into vacuoles to maintain metal homeostasis. The polypeptide is Metal tolerance protein 10 (MTP10) (Arabidopsis thaliana (Mouse-ear cress)).